The primary structure comprises 133 residues: Cytochrome c' (133 aa).

Positions 12, 72, 122, 125, and 126 each coordinate heme c.

Post-translationally, binds 1 heme c group covalently per subunit.

Functionally, cytochrome c' is the most widely occurring bacterial c-type cytochrome. Cytochromes c' are high-spin proteins and the heme has no sixth ligand. Their exact function is not known. The chain is Cytochrome c' from Rhodocyclus tenuis (Rhodospirillum tenue).